A 328-amino-acid chain; its full sequence is MSSPIKIAVTGAAGQIGYSLLFRIASGALFGGDTPVQLRLLEITPALKALEGVVMELDDCAFPALDSVEIGDDADHIFDGVTLALLVGARPRSKGMERGDLLSANGAIFTAQGKALNRVAADDVRIGVTGNPANTNALIAMSNAPDIPASRFSALTRLDHNRAIGQLAAKTHARVGDIRKMTVWGNHSATQYPDIFHAEVAGRNAAEVVNDQDWIENEFIPTVAGRGAAIIEARGASSAASAASATIDAARDWLLGTPEGDWVSMAVASDGSYGVPEGLMYSYPVTTSGGNWEIVEGLEVNDFSRRKMDATAAELFDERAAVANLGLI.

An NAD(+)-binding site is contributed by 11-17 (GAAGQIG). Residues R92 and R98 each coordinate substrate. Residues N105, Q112, and 129 to 131 (TGN) contribute to the NAD(+) site. Residues N131 and R162 each contribute to the substrate site. H187 (proton acceptor) is an active-site residue.

Belongs to the LDH/MDH superfamily. MDH type 2 family.

The catalysed reaction is (S)-malate + NAD(+) = oxaloacetate + NADH + H(+). Catalyzes the reversible oxidation of malate to oxaloacetate. In Paenarthrobacter aurescens (strain TC1), this protein is Malate dehydrogenase.